Consider the following 487-residue polypeptide: V-type proton ATPase subunit B3 (487 aa).

The protein belongs to the ATPase alpha/beta chains family. V-ATPase is a heteromultimeric enzyme composed of a peripheral catalytic V1 complex (components A to H) attached to an integral membrane V0 proton pore complex (components: a, c, c'', d and e).

Its subcellular location is the vacuole membrane. Non-catalytic subunit of the peripheral V1 complex of vacuolar ATPase. V-ATPase is responsible for acidifying a variety of intracellular compartments in eukaryotic cells. In Arabidopsis thaliana (Mouse-ear cress), this protein is V-type proton ATPase subunit B3 (VHA-B3).